The chain runs to 214 residues: A-type ATP synthase subunit D (214 aa).

The protein belongs to the V-ATPase D subunit family. Has multiple subunits with at least A(3), B(3), C, D, E, F, H, I and proteolipid K(x).

The protein localises to the cell membrane. Functionally, component of the A-type ATP synthase that produces ATP from ADP in the presence of a proton gradient across the membrane. The protein is A-type ATP synthase subunit D of Pyrococcus furiosus (strain ATCC 43587 / DSM 3638 / JCM 8422 / Vc1).